The sequence spans 702 residues: Methionine--tRNA ligase (702 aa).

Positions 23-33 (PYANGPLHLGH) match the 'HIGH' region motif. Positions 154, 157, 167, and 170 each coordinate Zn(2+). Residues 341-345 (KMSKS) carry the 'KMSKS' region motif. Lys344 serves as a coordination point for ATP. The interval 562–593 (LAPPPASAKQQNASMSNTAPPPTAEEPETTAP) is disordered. A compositionally biased stretch (polar residues) spans 569–578 (AKQQNASMSN). Residues 599-702 (DFAKLDLRIG…SSAQPGMPVR (104 aa)) enclose the tRNA-binding domain.

Belongs to the class-I aminoacyl-tRNA synthetase family. MetG type 1 subfamily. As to quaternary structure, homodimer. Requires Zn(2+) as cofactor.

It localises to the cytoplasm. It carries out the reaction tRNA(Met) + L-methionine + ATP = L-methionyl-tRNA(Met) + AMP + diphosphate. Is required not only for elongation of protein synthesis but also for the initiation of all mRNA translation through initiator tRNA(fMet) aminoacylation. The polypeptide is Methionine--tRNA ligase (Xylella fastidiosa (strain M12)).